Here is a 386-residue protein sequence, read N- to C-terminus: Alkanesulfonate monooxygenase (386 aa).

It belongs to the SsuD family.

It carries out the reaction an alkanesulfonate + FMNH2 + O2 = an aldehyde + FMN + sulfite + H2O + 2 H(+). Functionally, catalyzes the desulfonation of aliphatic sulfonates. The protein is Alkanesulfonate monooxygenase of Delftia acidovorans (strain DSM 14801 / SPH-1).